Reading from the N-terminus, the 175-residue chain is Large ribosomal subunit protein uL10 (175 aa).

The protein belongs to the universal ribosomal protein uL10 family. Part of the ribosomal stalk of the 50S ribosomal subunit. The N-terminus interacts with L11 and the large rRNA to form the base of the stalk. The C-terminus forms an elongated spine to which L12 dimers bind in a sequential fashion forming a multimeric L10(L12)X complex.

Forms part of the ribosomal stalk, playing a central role in the interaction of the ribosome with GTP-bound translation factors. The protein is Large ribosomal subunit protein uL10 of Synechococcus sp. (strain CC9902).